Consider the following 456-residue polypeptide: Kynurenine 3-monooxygenase (456 aa).

The protein belongs to the aromatic-ring hydroxylase family. KMO subfamily. It depends on FAD as a cofactor.

It carries out the reaction L-kynurenine + NADPH + O2 + H(+) = 3-hydroxy-L-kynurenine + NADP(+) + H2O. The protein operates within cofactor biosynthesis; NAD(+) biosynthesis; quinolinate from L-kynurenine: step 1/3. Functionally, catalyzes the hydroxylation of L-kynurenine (L-Kyn) to form 3-hydroxy-L-kynurenine (L-3OHKyn). Required for synthesis of quinolinic acid. The chain is Kynurenine 3-monooxygenase from Xanthomonas campestris pv. campestris (strain 8004).